The following is a 271-amino-acid chain: Type III pantothenate kinase (271 aa).

6–13 contacts ATP; that stretch reads DVRNTNIV. Residue 109–112 coordinates substrate; the sequence is GADR. The Proton acceptor role is filled by aspartate 111. Position 131 (aspartate 131) interacts with K(+). Threonine 134 provides a ligand contact to ATP. Threonine 186 contributes to the substrate binding site.

Belongs to the type III pantothenate kinase family. As to quaternary structure, homodimer. NH4(+) is required as a cofactor. K(+) serves as cofactor.

The protein localises to the cytoplasm. It catalyses the reaction (R)-pantothenate + ATP = (R)-4'-phosphopantothenate + ADP + H(+). The protein operates within cofactor biosynthesis; coenzyme A biosynthesis; CoA from (R)-pantothenate: step 1/5. Functionally, catalyzes the phosphorylation of pantothenate (Pan), the first step in CoA biosynthesis. This Rhodococcus erythropolis (strain PR4 / NBRC 100887) protein is Type III pantothenate kinase.